A 120-amino-acid chain; its full sequence is MVEDIIIVSTPYVPGYKITKTYGFTWGLIVRSRGIGGNIIASLRTIFGGEIHEYTELLNQSRQYALDRMKQHAREMGANAVVSVGFDSSDIGQNMSEVLAFGTAVTVEPETAASSPVRLG.

Belongs to the UPF0145 family.

This is UPF0145 protein UNCMA_30400 from Methanocella arvoryzae (strain DSM 22066 / NBRC 105507 / MRE50).